The sequence spans 290 residues: Small ribosomal subunit biogenesis GTPase RsgA (290 aa).

One can recognise a CP-type G domain in the interval 62–213; the sequence is KNSLVRPPIV…IADTPGFSSL (152 aa). Residues 111–114 and 156–164 each bind GTP; these read SKMD and GQTGVGKST. The Zn(2+) site is built by cysteine 237, cysteine 242, histidine 244, and cysteine 250.

This sequence belongs to the TRAFAC class YlqF/YawG GTPase family. RsgA subfamily. Monomer. Associates with 30S ribosomal subunit, binds 16S rRNA. It depends on Zn(2+) as a cofactor.

It is found in the cytoplasm. Functionally, one of several proteins that assist in the late maturation steps of the functional core of the 30S ribosomal subunit. Helps release RbfA from mature subunits. May play a role in the assembly of ribosomal proteins into the subunit. Circularly permuted GTPase that catalyzes slow GTP hydrolysis, GTPase activity is stimulated by the 30S ribosomal subunit. The chain is Small ribosomal subunit biogenesis GTPase RsgA from Streptococcus pyogenes serotype M6 (strain ATCC BAA-946 / MGAS10394).